Here is a 120-residue protein sequence, read N- to C-terminus: NAD(P)H-quinone oxidoreductase subunit 3, chloroplastic (120 aa).

The next 3 helical transmembrane spans lie at 9 to 29 (IFWA…LISG), 64 to 84 (MFAL…PWAM), and 88 to 108 (VLGV…ILGL).

It belongs to the complex I subunit 3 family. NDH is composed of at least 16 different subunits, 5 of which are encoded in the nucleus.

The protein resides in the plastid. It localises to the chloroplast thylakoid membrane. It catalyses the reaction a plastoquinone + NADH + (n+1) H(+)(in) = a plastoquinol + NAD(+) + n H(+)(out). It carries out the reaction a plastoquinone + NADPH + (n+1) H(+)(in) = a plastoquinol + NADP(+) + n H(+)(out). Its function is as follows. NDH shuttles electrons from NAD(P)H:plastoquinone, via FMN and iron-sulfur (Fe-S) centers, to quinones in the photosynthetic chain and possibly in a chloroplast respiratory chain. The immediate electron acceptor for the enzyme in this species is believed to be plastoquinone. Couples the redox reaction to proton translocation, and thus conserves the redox energy in a proton gradient. The protein is NAD(P)H-quinone oxidoreductase subunit 3, chloroplastic of Draba nemorosa (Woodland whitlowgrass).